Consider the following 822-residue polypeptide: DNA gyrase subunit A (822 aa).

A Topo IIA-type catalytic domain is found at Leu-32–Leu-497. Residue Tyr-120 is the O-(5'-phospho-DNA)-tyrosine intermediate of the active site. The GyrA-box motif lies at Gln-524–Gly-530.

The protein belongs to the type II topoisomerase GyrA/ParC subunit family. As to quaternary structure, heterotetramer, composed of two GyrA and two GyrB chains. In the heterotetramer, GyrA contains the active site tyrosine that forms a transient covalent intermediate with DNA, while GyrB binds cofactors and catalyzes ATP hydrolysis.

The protein resides in the cytoplasm. It carries out the reaction ATP-dependent breakage, passage and rejoining of double-stranded DNA.. In terms of biological role, a type II topoisomerase that negatively supercoils closed circular double-stranded (ds) DNA in an ATP-dependent manner to modulate DNA topology and maintain chromosomes in an underwound state. Negative supercoiling favors strand separation, and DNA replication, transcription, recombination and repair, all of which involve strand separation. Also able to catalyze the interconversion of other topological isomers of dsDNA rings, including catenanes and knotted rings. Type II topoisomerases break and join 2 DNA strands simultaneously in an ATP-dependent manner. This Streptococcus pneumoniae (strain ATCC BAA-255 / R6) protein is DNA gyrase subunit A.